The sequence spans 825 residues: Probable inorganic carbon transporter subunit DabA (825 aa).

Zn(2+) contacts are provided by Cys334, Asp336, His521, and Cys536.

The protein belongs to the inorganic carbon transporter (TC 9.A.2) DabA family. As to quaternary structure, forms a complex with DabB. Requires Zn(2+) as cofactor.

It localises to the cell inner membrane. In terms of biological role, part of an energy-coupled inorganic carbon pump. This chain is Probable inorganic carbon transporter subunit DabA, found in Acidithiobacillus ferrooxidans (strain ATCC 23270 / DSM 14882 / CIP 104768 / NCIMB 8455) (Ferrobacillus ferrooxidans (strain ATCC 23270)).